We begin with the raw amino-acid sequence, 234 residues long: Small ribosomal subunit protein uS2 (234 aa).

Belongs to the universal ribosomal protein uS2 family.

This is Small ribosomal subunit protein uS2 from Prochlorococcus marinus (strain MIT 9515).